The sequence spans 703 residues: uncharacterized protein (703 aa).

The first 23 residues, 1–23, serve as a signal peptide directing secretion; it reads MKQIMIFLTSFMLLAMTGQTALA. The chain crosses the membrane as a helical span at residues 673–693; the sequence is MYIGVLALIMVVAAVFIWIAV.

It is found in the cell membrane. This is an uncharacterized protein from Bacillus subtilis (strain 168).